Reading from the N-terminus, the 1448-residue chain is MAHSKAKGNDGKITYPPGVKEISDKISKEEMVRRLKMVVKTFMDMDQDSEEEKEQYLNLALHLASDFFLKHPDKDVRLLVACCLADIFRIYAPEAPYTSPDKLKDIFMFISRQLKGLEDTKSPQFNRYFYLLENIAWVKSYNICFELEDSNEIFTQLYRTLFSVINNGHNQKVHMHMVDLMSSIVCEGDTVSQELLDSVLVNLVPAHKNLNKQAYDLAKALLKRTAQAIEPYITNFFNQVLMLGKTSISDLSEHVFDLILELYNIDSHLLLSVLPQLEFKLKSNDNEERLQVVKLLAKMFGAKDSELASQNKTLWQCYLGRFNDIHVPVRLECVKFASHSLVNHPDLAKDLTDYLKVRSHDPEEAIRHDVIVSIVTAAKKDLLLVNDQLLNFVRERTLDKRWRVRKEAMMGLAQIYKKYSLQAEAGKESAKQISWIKDKLLHIYYQNSIDDRLLVERIFAQYMVPHNLETTERMKCLYYLYATLDTNAVKALNEMWKCQNMLRHHVKDLLDLIKKPKTEAGSKAIFSKVMVITRNLPDPGKGQDFLKKFTQVLEDDEKIRGQLEKLVSPTCSCKQAEVCVRDITKKLGNPKQPTNPFLEMIKFLLERIAPVHIDTESISALIKLVNKSIDGTADDEDEGVTTDQAIRAGLELLKVLSFTHPISFHSAETFESLLACLKMDDEKVAEAALQIFKNTGSKIEEDFPHIRSALLPVLQQKAKKGPPRQAKYSIHCIQAIFSSKETQFAQIFEPLHKSLDPGNPEQLITSLVSIGHIAQLAPDQFTAPLKSMVATFVVKDLLMTDRLPGKKTTKLWVSDDEVSTETKVKIQAIKMMVRWLLGMKNNLSKSGNSTLRLLMAILHTDGDLTEHGKLSKPDMSRLRLAAASAIVKLAQEPCYHEIITLEQYQLCALVINDECYQVRQLFAQKIHKGLSRLRLPLEYMAICALCAKDPVKERRAHARQCLVKNINVRREYLKQHAAVSEKLFSLLPEYVVPYTVHLLAHDPDYVKVQDIEQLKDIKECLWFVLEILMSKNENNSHAFIRKMVEYIKQTKDGQNPDDQKMNEKMYTVCDVAMNIIISKSTTYSLESPKDPVLPARFFTQPDKNFSNTKNYLPAELKSFFTPGKPKSTNVLGAVNKPLSSAGKQMLSKSSRMETVSNASSGSNPSSPGKIKGRLDSMELDQSENEDYTMSSPLSGKKSDKRDDSDLLKSELEKPRRGKKQSLIDQDDSLSMDELSKPAQEPKSRTGQRGRKRAAAASDSEEQTWQEKRLKEDLLENEDEQNSPPKKGRRGRPPKSAKMAISKEEPTVTTPKRGRKKAVPVESPPTDEDDHLEISEEQDFENIDQKRKGRGSSRRTPQKSDSTDSLLDTSRPTPQKRRGRPPKTPTVQQKKSHVGRPRKVVSKEPESEEEMEMSQNSPALSEHLSNEDESAEEVVVAPSTGRLRSAKKR.

One copy of the HEAT repeat lies at L383 to Y419. Residues A1141–V1155 are compositionally biased toward polar residues. Residues A1141–R1448 form a disordered region. Over residues S1156–G1168 the composition is skewed to low complexity. A compositionally biased stretch (acidic residues) spans M1177–D1186. Basic and acidic residues-rich tracts occupy residues K1196 to P1214, E1233 to S1243, and W1264 to L1273. Residues K1285–K1294 show a composition bias toward basic residues. Positions K1286 to M1298 form a DNA-binding region, a.T hook 1. Positions P1324–N1341 are enriched in acidic residues. Positions R1346–P1356 are enriched in basic residues. DNA-binding regions (a.T hook) lie at residues Q1374 to V1386 and K1390 to K1402. The span at K1389–V1399 shows a compositional bias: basic residues.

It belongs to the PDS5 family. Interacts with the cohesin complex. In terms of processing, phosphorylated in mitotic cells.

Its subcellular location is the nucleus. In terms of biological role, plays a role in androgen-induced proliferative arrest. Required for maintenance of sister chromatid cohesion during mitosis. The chain is Sister chromatid cohesion protein PDS5 homolog B-A (pds5b-a) from Xenopus laevis (African clawed frog).